The primary structure comprises 360 residues: DNA replication and repair protein RecF (360 aa).

Residue 30–37 participates in ATP binding; that stretch reads GHNGSGKT.

It belongs to the RecF family.

It localises to the cytoplasm. Its function is as follows. The RecF protein is involved in DNA metabolism; it is required for DNA replication and normal SOS inducibility. RecF binds preferentially to single-stranded, linear DNA. It also seems to bind ATP. In Shewanella pealeana (strain ATCC 700345 / ANG-SQ1), this protein is DNA replication and repair protein RecF.